A 38-amino-acid chain; its full sequence is Toxin CSTX-16 (38 aa).

Gln19 and Gln38 each carry glutamine amide.

This sequence belongs to the cationic peptide 04 (cupiennin) family. 10 (double chain) subfamily. As to expression, expressed by the venom gland.

The protein localises to the secreted. The chain is Toxin CSTX-16 from Cupiennius salei (American wandering spider).